The chain runs to 484 residues: Sodium/pantothenate symporter (484 aa).

The next 13 helical transmembrane spans lie at L3–A23, G45–G65, L74–L94, V124–I144, L162–V182, T190–V210, F238–V258, M273–L293, V307–A327, V366–L386, L397–W417, G424–I444, and L446–G466.

This sequence belongs to the sodium:solute symporter (SSF) (TC 2.A.21) family.

The protein localises to the cell inner membrane. The enzyme catalyses (R)-pantothenate(in) + Na(+)(in) = (R)-pantothenate(out) + Na(+)(out). Catalyzes the sodium-dependent uptake of extracellular pantothenate. The chain is Sodium/pantothenate symporter (panF) from Haemophilus influenzae (strain ATCC 51907 / DSM 11121 / KW20 / Rd).